Here is a 421-residue protein sequence, read N- to C-terminus: Tyrosine-protein phosphatase non-receptor type 20 (421 aa).

A disordered region spans residues methionine 1–histidine 58. Positions leucine 27–threonine 41 are enriched in low complexity. Residues lysine 48–histidine 58 show a composition bias toward polar residues. A Phosphoserine modification is found at serine 76. Residues arginine 93–serine 116 are disordered. Residues proline 104–serine 116 show a composition bias toward polar residues. A Phosphoserine modification is found at serine 122. Residues isoleucine 160–valine 413 enclose the Tyrosine-protein phosphatase domain. Substrate-binding positions include aspartate 324, cysteine 354–arginine 360, and glutamine 398. Catalysis depends on cysteine 354, which acts as the Phosphocysteine intermediate.

Belongs to the protein-tyrosine phosphatase family. Non-receptor class subfamily.

It is found in the nucleus. Its subcellular location is the cytoplasm. It localises to the cytoskeleton. The protein resides in the microtubule organizing center. The protein localises to the centrosome. It catalyses the reaction O-phospho-L-tyrosyl-[protein] + H2O = L-tyrosyl-[protein] + phosphate. Tyrosine-protein phosphatase targeted to sites of actin polymerization in response of varied extracellular stimuli. Has tyrosine phosphatase activity towards various tyrosyl phosphorylated substrates. This chain is Tyrosine-protein phosphatase non-receptor type 20 (Ptpn20), found in Rattus norvegicus (Rat).